Here is a 364-residue protein sequence, read N- to C-terminus: Methylthioribose-1-phosphate isomerase (364 aa).

D254 acts as the Proton donor in catalysis.

This sequence belongs to the eIF-2B alpha/beta/delta subunits family. MtnA subfamily.

It is found in the cytoplasm. The protein resides in the nucleus. The enzyme catalyses 5-(methylsulfanyl)-alpha-D-ribose 1-phosphate = 5-(methylsulfanyl)-D-ribulose 1-phosphate. The protein operates within amino-acid biosynthesis; L-methionine biosynthesis via salvage pathway; L-methionine from S-methyl-5-thio-alpha-D-ribose 1-phosphate: step 1/6. Catalyzes the interconversion of methylthioribose-1-phosphate (MTR-1-P) into methylthioribulose-1-phosphate (MTRu-1-P). This is Methylthioribose-1-phosphate isomerase from Drosophila yakuba (Fruit fly).